Reading from the N-terminus, the 317-residue chain is OVARIAN TUMOR DOMAIN-containing deubiquitinating enzyme 4 (317 aa).

Residues 168-306 (YSIIGIPGDG…FGHYDALLLH (139 aa)) form the OTU domain. Residue aspartate 176 is part of the active site. Cysteine 179 functions as the Nucleophile in the catalytic mechanism. Histidine 299 is a catalytic residue.

Belongs to the peptidase C65 family.

It localises to the cytoplasm. It carries out the reaction Thiol-dependent hydrolysis of ester, thioester, amide, peptide and isopeptide bonds formed by the C-terminal Gly of ubiquitin (a 76-residue protein attached to proteins as an intracellular targeting signal).. Functionally, hydrolase that can remove conjugated ubiquitin from proteins in vitro and may therefore play an important regulatory role at the level of protein turnover by preventing degradation. Cysteine protease with a preference for 'Lys-63' over 'Lys-48'-linked over 'Met-1' ubiquitin (UB) tetramers (e.g. Ub3 and Ub4) as substrates. Also cleaves RUB-GST fusion. This chain is OVARIAN TUMOR DOMAIN-containing deubiquitinating enzyme 4, found in Arabidopsis thaliana (Mouse-ear cress).